A 278-amino-acid chain; its full sequence is 3-methyl-2-oxobutanoate hydroxymethyltransferase (278 aa).

2 residues coordinate Mg(2+): D43 and D82. Residues 43-44 (DS), D82, and K112 contribute to the 3-methyl-2-oxobutanoate site. E114 provides a ligand contact to Mg(2+). The Proton acceptor role is filled by E181.

The protein belongs to the PanB family. As to quaternary structure, homodecamer; pentamer of dimers. It depends on Mg(2+) as a cofactor.

It localises to the cytoplasm. It catalyses the reaction 3-methyl-2-oxobutanoate + (6R)-5,10-methylene-5,6,7,8-tetrahydrofolate + H2O = 2-dehydropantoate + (6S)-5,6,7,8-tetrahydrofolate. The protein operates within cofactor biosynthesis; (R)-pantothenate biosynthesis; (R)-pantoate from 3-methyl-2-oxobutanoate: step 1/2. Functionally, catalyzes the reversible reaction in which hydroxymethyl group from 5,10-methylenetetrahydrofolate is transferred onto alpha-ketoisovalerate to form ketopantoate. This Bacillus cereus (strain ATCC 10987 / NRS 248) protein is 3-methyl-2-oxobutanoate hydroxymethyltransferase.